The sequence spans 219 residues: MSHPQSRPGGRDGRPRRRREPREEAPWVPKTALGKRVNAGEITSLEEIQEAGARIQESGIIKKLLPDLKTEVVDVGIIQKMTSNGQSTRFKAIVAAGNENGYLGIGQGKAKQMRIAIEKANNQALLNVGPIKLGCGSWECRCDQKHSVPFKVRGKGGSVVIEILPAPRGLGLVAGGKIRRLLELAGLKDAYTTAKGSTPTTNSTSKAVLECLRQTFSQG.

The tract at residues 1-32 (MSHPQSRPGGRDGRPRRRREPREEAPWVPKTA) is disordered. The S5 DRBM domain occupies 68-131 (LKTEVVDVGI…NQALLNVGPI (64 aa)).

The protein belongs to the universal ribosomal protein uS5 family. In terms of assembly, part of the 30S ribosomal subunit. Contacts protein S4.

Functionally, with S4 and S12 plays an important role in translational accuracy. The chain is Small ribosomal subunit protein uS5 (rps5) from Cenarchaeum symbiosum (strain A).